The following is a 296-amino-acid chain: NAD kinase (296 aa).

The active-site Proton acceptor is the Asp72. NAD(+) contacts are provided by residues 72–73 (DG), 146–147 (ND), Arg157, Lys174, Asp176, 187–192 (TAYALS), and Gln247.

This sequence belongs to the NAD kinase family. Requires a divalent metal cation as cofactor.

It localises to the cytoplasm. The catalysed reaction is NAD(+) + ATP = ADP + NADP(+) + H(+). Involved in the regulation of the intracellular balance of NAD and NADP, and is a key enzyme in the biosynthesis of NADP. Catalyzes specifically the phosphorylation on 2'-hydroxyl of the adenosine moiety of NAD to yield NADP. The sequence is that of NAD kinase from Pseudomonas fluorescens (strain ATCC BAA-477 / NRRL B-23932 / Pf-5).